We begin with the raw amino-acid sequence, 239 residues long: MRSGIIAKKVGMTRLFMEDGKQIPVTVLSLDGLQVVAQRTEDKDGYTAVQLGAGSAKVKRVSKAMRGHFAASKVEPKRKLVEFRVPADGLIEVGAEISAEHFLEGQKVDVTGTSIGKGFAGAMKRWNFGGLRASHGVSISHRSHGSTGQCQDPGKVFKGKKMAGHMGAARVTTQNLEVVKTDADRGLVFIKGAVPGPKSGWVTVKDAVKKKAPEGLPFPAALKTAAEAAAEAPAEGGEA.

Position 151 is an N5-methylglutamine (glutamine 151).

Belongs to the universal ribosomal protein uL3 family. As to quaternary structure, part of the 50S ribosomal subunit. Forms a cluster with proteins L14 and L19. Post-translationally, methylated by PrmB.

Functionally, one of the primary rRNA binding proteins, it binds directly near the 3'-end of the 23S rRNA, where it nucleates assembly of the 50S subunit. This Ruegeria sp. (strain TM1040) (Silicibacter sp.) protein is Large ribosomal subunit protein uL3.